The primary structure comprises 100 residues: U-myrmeciitoxin(01)-Mg7b (100 aa).

The first 17 residues, 1 to 17, serve as a signal peptide directing secretion; sequence MKLSCLSLALAIILVLA. A propeptide spanning residues 18–50 is cleaved from the precursor; that stretch reads IVYSPHMEVKALADAEPDAIGFADAFGEADAEP. Residue S85 is glycosylated (O-linked (GalNAc...) serine). O-linked (GalNAc...) threonine glycosylation is found at T94 and T95.

It belongs to the formicidae venom precursor-01 superfamily. In terms of processing, glycosylation is critical to maintaining the aqueous solubility of this protein, but does not directly contribute to its activity. Expressed by the venom gland.

It is found in the secreted. Its subcellular location is the target cell membrane. Neurotoxin that triggers pain behavior and inflammation in mammals, and is paralytic and lethal to insects. Causes a time-dependent increase in cell leak current. May act by targeting membranes. The chain is U-myrmeciitoxin(01)-Mg7b from Myrmecia gulosa (Red bulldog ant).